The chain runs to 139 residues: D-ribose pyranase (139 aa).

Histidine 20 acts as the Proton donor in catalysis. Substrate is bound by residues aspartate 28, histidine 106, and tyrosine 128–asparagine 130.

This sequence belongs to the RbsD / FucU family. RbsD subfamily. In terms of assembly, homodecamer.

It localises to the cytoplasm. The enzyme catalyses beta-D-ribopyranose = beta-D-ribofuranose. Its pathway is carbohydrate metabolism; D-ribose degradation; D-ribose 5-phosphate from beta-D-ribopyranose: step 1/2. In terms of biological role, catalyzes the interconversion of beta-pyran and beta-furan forms of D-ribose. The protein is D-ribose pyranase of Histophilus somni (strain 129Pt) (Haemophilus somnus).